Reading from the N-terminus, the 516-residue chain is 2-isopropylmalate synthase (516 aa).

Residues 5–267 enclose the Pyruvate carboxyltransferase domain; sequence VIIFDTTLRD…STNIVHKEIY (263 aa). Mn(2+) contacts are provided by aspartate 14, histidine 202, histidine 204, and asparagine 238. Residues 392 to 516 are regulatory domain; sequence YLKFFSVQSI…NKKLKNLKKY (125 aa).

Belongs to the alpha-IPM synthase/homocitrate synthase family. LeuA type 1 subfamily. Homodimer. Mn(2+) serves as cofactor.

The protein localises to the cytoplasm. It carries out the reaction 3-methyl-2-oxobutanoate + acetyl-CoA + H2O = (2S)-2-isopropylmalate + CoA + H(+). It functions in the pathway amino-acid biosynthesis; L-leucine biosynthesis; L-leucine from 3-methyl-2-oxobutanoate: step 1/4. Functionally, catalyzes the condensation of the acetyl group of acetyl-CoA with 3-methyl-2-oxobutanoate (2-ketoisovalerate) to form 3-carboxy-3-hydroxy-4-methylpentanoate (2-isopropylmalate). In Buchnera aphidicola subsp. Diuraphis noxia, this protein is 2-isopropylmalate synthase.